Consider the following 571-residue polypeptide: MSGHSRNSEQEDTLSEELDEDELLANLSPEELKELQSEMEVMAPDPHLPVGMIQKDQTDKAPTGNFNHKSLVDYMYLQKASRRMLEDERVPVSFVQSEKNTQNQREVGDKGIKNMPQFLKEKLNSEILAKKRESNGSNNVQEAEDDDEDEEEEEEDDEDEEEEEEDEEDDEGEEDEDGEQANREKNDAKEQIHNNPGTYQQLATKTAHEQKDTSETKEKGEKKIAKLDPKKLALDTSFLKVSARPSGNQTDLDGSLRRVRQNDPDMKELNLNNIENIPKEMLLDFVNAMKKNKHIKTFSLANVGADESVAFALANMLRENRSVTTLNIESNFITGKGIVAIMRCLQFNETLTELRFHNQRHMLGHHAEMEISRLLKANTTLLKMGYHFELPGPRMVVTNLLTRNQDKRRQKRQEEQQQQQLKEQRKLIAMLENGLGLPPGMWERLGGPMPDPRMQEFFQPASGRPLDAQEVPFGSRKEMIKNPPQPPQCKTDPDSFRVVKLKRIQRKSRMPEAREAQEKTNLKDVIKTLKPVPRNRPPPLVEITPRDQLLNDIRHSNVAYLKPVQLPKELE.

Disordered stretches follow at residues 1–29 (MSGH…NLSP), 46–67 (PHLP…GNFN), and 91–228 (PVSF…AKLD). Residues 10-23 (QEDTLSEELDEDEL) show a composition bias toward acidic residues. Positions 94–105 (FVQSEKNTQNQR) are enriched in polar residues. Over residues 119–134 (LKEKLNSEILAKKRES) the composition is skewed to basic and acidic residues. The span at 142-179 (EAEDDDEDEEEEEEDDEDEEEEEEDEEDDEGEEDEDGE) shows a compositional bias: acidic residues. The segment covering 180–192 (QANREKNDAKEQI) has biased composition (basic and acidic residues). Positions 193–204 (HNNPGTYQQLAT) are enriched in polar residues. A compositionally biased stretch (basic and acidic residues) spans 206–228 (TAHEQKDTSETKEKGEKKIAKLD). Residues 397 to 436 (VTNLLTRNQDKRRQKRQEEQQQQQLKEQRKLIAMLENGLG) adopt a coiled-coil conformation. A WH2 domain is found at 545-564 (PRDQLLNDIRHSNVAYLKPV).

Belongs to the tropomodulin family. In terms of assembly, may interact with tropomyosin alpha (TPM1/2) N-terminus. Interacts with KLHL40; leading to stabilization. Post-translationally, ubiquitinated, leading to its degradation. Interaction with KLHL40 negatively regulates ubiquitination and degradation. In terms of tissue distribution, skeletal muscle and heart-specific (at protein level).

The protein resides in the cytoplasm. The protein localises to the myofibril. It localises to the sarcomere. Its subcellular location is the a band. It is found in the m line. The protein resides in the cytoskeleton. Its function is as follows. Essential for the organization of sarcomeric actin thin filaments in skeletal muscle. Increases the rate of actin polymerization. This Mus musculus (Mouse) protein is Leiomodin-3.